The sequence spans 142 residues: Thioredoxin-like protein YLS8 (142 aa).

This sequence belongs to the DIM1 family. Expressed in roots, leaves, stems, cauline leaves and flowers.

This Arabidopsis thaliana (Mouse-ear cress) protein is Thioredoxin-like protein YLS8 (YLS8).